Here is a 278-residue protein sequence, read N- to C-terminus: NH(3)-dependent NAD(+) synthetase (278 aa).

43–50 (GISGGVDS) lines the ATP pocket. Mg(2+) is bound at residue Asp49. Arg146 is a deamido-NAD(+) binding site. Thr166 contributes to the ATP binding site. Glu171 is a binding site for Mg(2+). Deamido-NAD(+) contacts are provided by Lys179 and Asp186. Residues Lys195 and Thr217 each coordinate ATP. Deamido-NAD(+) is bound at residue 266-267 (HK).

Belongs to the NAD synthetase family. In terms of assembly, homodimer.

The catalysed reaction is deamido-NAD(+) + NH4(+) + ATP = AMP + diphosphate + NAD(+) + H(+). Its pathway is cofactor biosynthesis; NAD(+) biosynthesis; NAD(+) from deamido-NAD(+) (ammonia route): step 1/1. Functionally, catalyzes the ATP-dependent amidation of deamido-NAD to form NAD. Uses ammonia as a nitrogen source. This chain is NH(3)-dependent NAD(+) synthetase, found in Pseudoalteromonas translucida (strain TAC 125).